The chain runs to 205 residues: Low-density lipoprotein receptor class A domain-containing protein 1 (205 aa).

The chain crosses the membrane as a helical span at residues 43-63; sequence LLLLLATVAALIALVTILGLP. The 44-residue stretch at 71-114 folds into the LDL-receptor class A 1 domain; the sequence is ACITLTNRTGFLCHDQRSCIPASGVCDGVRTCTHGEDEDESLCR. 6 disulfides stabilise this stretch: C72–C89, C83–C102, C96–C113, C141–C160, C163–C180, and C170–C193. Positions 115 to 161 constitute an LDL-receptor class A 2; atypical domain; the sequence is DVPQSLPHFLVAHCGDPASWIYSDQKCDGTNNCGDCSDELSPVTVCP. The LDL-receptor class A 3; atypical domain maps to 162–203; that stretch reads PCGPGWWRCPSTFFKYCDCIPRHLCRDHVQHCSDWSDEYACP.

This sequence belongs to the LDLR family.

Its subcellular location is the membrane. The chain is Low-density lipoprotein receptor class A domain-containing protein 1 (LDLRAD1) from Homo sapiens (Human).